We begin with the raw amino-acid sequence, 292 residues long: 5,10-methylenetetrahydrofolate reductase (292 aa).

Residue Glu26 is the Proton donor/acceptor of the active site. Thr57 is an NADH binding site. Tyr58, Ala60, His86, Arg116, Gly117, Asp118, Ala130, Tyr150, His154, Ala157, Asp163, Asn166, Arg169, and Lys170 together coordinate FAD. Asp118 serves as a coordination point for (6S)-5-methyl-5,6,7,8-tetrahydrofolate. Gln181 serves as a coordination point for NADH. (6S)-5-methyl-5,6,7,8-tetrahydrofolate-binding residues include Gln181, Gln217, and Arg277.

Belongs to the methylenetetrahydrofolate reductase family. The cofactor is FAD.

It carries out the reaction (6S)-5-methyl-5,6,7,8-tetrahydrofolate + NAD(+) = (6R)-5,10-methylene-5,6,7,8-tetrahydrofolate + NADH + H(+). Its pathway is one-carbon metabolism; tetrahydrofolate interconversion. It functions in the pathway amino-acid biosynthesis; L-methionine biosynthesis via de novo pathway. Catalyzes the NADH-dependent reduction of 5,10-methylenetetrahydrofolate to 5-methyltetrahydrofolate. Is required to provide the methyl group necessary for methionine synthetase to convert homocysteine to methionine; the methyl group is given by 5-methyltetrahydrofolate. This is 5,10-methylenetetrahydrofolate reductase (metF) from Haemophilus influenzae (strain ATCC 51907 / DSM 11121 / KW20 / Rd).